We begin with the raw amino-acid sequence, 474 residues long: ATP synthase subunit beta (474 aa).

151–158 is an ATP binding site; sequence GGAGVGKT.

This sequence belongs to the ATPase alpha/beta chains family. F-type ATPases have 2 components, CF(1) - the catalytic core - and CF(0) - the membrane proton channel. CF(1) has five subunits: alpha(3), beta(3), gamma(1), delta(1), epsilon(1). CF(0) has three main subunits: a(1), b(2) and c(9-12). The alpha and beta chains form an alternating ring which encloses part of the gamma chain. CF(1) is attached to CF(0) by a central stalk formed by the gamma and epsilon chains, while a peripheral stalk is formed by the delta and b chains.

The protein localises to the cell inner membrane. The catalysed reaction is ATP + H2O + 4 H(+)(in) = ADP + phosphate + 5 H(+)(out). Functionally, produces ATP from ADP in the presence of a proton gradient across the membrane. The catalytic sites are hosted primarily by the beta subunits. This chain is ATP synthase subunit beta, found in Paracoccus denitrificans (strain Pd 1222).